A 142-amino-acid polypeptide reads, in one-letter code: Transcription antitermination protein NusB (142 aa).

This sequence belongs to the NusB family.

Its function is as follows. Involved in transcription antitermination. Required for transcription of ribosomal RNA (rRNA) genes. Binds specifically to the boxA antiterminator sequence of the ribosomal RNA (rrn) operons. This Anaeromyxobacter dehalogenans (strain 2CP-1 / ATCC BAA-258) protein is Transcription antitermination protein NusB.